The chain runs to 199 residues: Twist-related protein 1 (199 aa).

The span at 1 to 18 (MMQDVSSSPVSPADDSLS) shows a compositional bias: low complexity. Positions 1–102 (MMQDVSSSPV…GGGSPQSYEE (102 aa)) are disordered. Basic residues predominate over residues 34 to 43 (RGGRKRRSSR). Composition is skewed to gly residues over residues 46-65 (AGGGAGPGGAAGGGVGGGDE) and 80-96 (GCGGGAGGGGSSSGGGS). Positions 105–156 (TQRVMANVRERQRTQSLNEAFAALRKIIPTLPSDKLSKIQTLKLAARYIDFL) constitute a bHLH domain. The tract at residues 158-188 (QVLQSDELDSKMASCSYVAHERLSYAFSVWR) is sufficient for transactivation activity.

In terms of assembly, efficient DNA binding requires dimerization with another bHLH protein. Homodimer or heterodimer with E proteins such as TCF3. ID1 binds preferentially to TCF3 but does not interact efficiently with TWIST1 so ID1 levels control the amount of TCF3 available to dimerize with TWIST and thus determine the type of dimer formed.

The protein localises to the nucleus. Acts as a transcriptional regulator. Inhibits myogenesis by sequestrating E proteins, inhibiting trans-activation by MEF2, and inhibiting DNA-binding by MYOD1 through physical interaction. This interaction probably involves the basic domains of both proteins. Also represses expression of pro-inflammatory cytokines such as TNFA and IL1B. Regulates cranial suture patterning and fusion. Activates transcription as a heterodimer with E proteins. Regulates gene expression differentially, depending on dimer composition. Homodimers induce expression of FGFR2 and POSTN while heterodimers repress FGFR2 and POSTN expression and induce THBS1 expression. Heterodimerization is also required for osteoblast differentiation. Represses the activity of the circadian transcriptional activator: NPAS2-BMAL1 heterodimer. The sequence is that of Twist-related protein 1 (TWIST1) from Microcebus murinus (Gray mouse lemur).